The chain runs to 477 residues: Ribulose bisphosphate carboxylase large chain (477 aa).

A propeptide spanning residues 1-2 (MS) is cleaved from the precursor. Position 3 is an N-acetylproline (Pro3). Residue Lys14 is modified to N6,N6,N6-trimethyllysine. Asn123 and Thr173 together coordinate substrate. Lys175 serves as the catalytic Proton acceptor. Lys177 contributes to the substrate binding site. Residues Lys201, Asp203, and Glu204 each contribute to the Mg(2+) site. Lys201 is subject to N6-carboxylysine. The active-site Proton acceptor is His294. The substrate site is built by Arg295, His327, and Ser379.

Belongs to the RuBisCO large chain family. Type I subfamily. Heterohexadecamer of 8 large chains and 8 small chains; disulfide-linked. The disulfide link is formed within the large subunit homodimers. It depends on Mg(2+) as a cofactor. In terms of processing, the disulfide bond which can form in the large chain dimeric partners within the hexadecamer appears to be associated with oxidative stress and protein turnover.

The protein resides in the plastid. It is found in the chloroplast. The enzyme catalyses 2 (2R)-3-phosphoglycerate + 2 H(+) = D-ribulose 1,5-bisphosphate + CO2 + H2O. It carries out the reaction D-ribulose 1,5-bisphosphate + O2 = 2-phosphoglycolate + (2R)-3-phosphoglycerate + 2 H(+). Functionally, ruBisCO catalyzes two reactions: the carboxylation of D-ribulose 1,5-bisphosphate, the primary event in carbon dioxide fixation, as well as the oxidative fragmentation of the pentose substrate in the photorespiration process. Both reactions occur simultaneously and in competition at the same active site. This chain is Ribulose bisphosphate carboxylase large chain, found in Oryza nivara (Indian wild rice).